A 216-amino-acid chain; its full sequence is Large ribosomal subunit protein uL3 (216 aa).

At Q157 the chain carries N5-methylglutamine.

It belongs to the universal ribosomal protein uL3 family. As to quaternary structure, part of the 50S ribosomal subunit. Forms a cluster with proteins L14 and L19. Post-translationally, methylated by PrmB.

In terms of biological role, one of the primary rRNA binding proteins, it binds directly near the 3'-end of the 23S rRNA, where it nucleates assembly of the 50S subunit. The protein is Large ribosomal subunit protein uL3 of Xanthomonas campestris pv. campestris (strain 8004).